The chain runs to 219 residues: Asperlin biosynthesis cluster protein I (219 aa).

The tract at residues 97 to 124 (TGSSDNSPTATGIGAAGLTGDRPSSSGA) is disordered. Residues 105 to 116 (TATGIGAAGLTG) are compositionally biased toward low complexity.

Its pathway is polyketide biosynthesis. Its function is as follows. Part of the gene cluster that mediates the biosynthesis of asperlin, a polyketide showing anti-inflammatory, antitumor and antibiotic activities. The first step of the asperlin biosynthesis is the production of the intermediate 2,4,6-octatrienoic acid by the highly redusing polyketide synthase alnA with cleavage of the PKS product by the esterase alnB. 2,4,6-octatrienoic acid is further converted to asperlin via several steps involving the remaining enzymes from the cluster. The sequence is that of Asperlin biosynthesis cluster protein I from Emericella nidulans (strain FGSC A4 / ATCC 38163 / CBS 112.46 / NRRL 194 / M139) (Aspergillus nidulans).